The sequence spans 287 residues: Pyridoxal 5'-phosphate synthase subunit PdxS (287 aa).

Position 21 (Asp-21) interacts with D-ribose 5-phosphate. The active-site Schiff-base intermediate with D-ribose 5-phosphate is Lys-78. Gly-150 provides a ligand contact to D-ribose 5-phosphate. Arg-162 is a binding site for D-glyceraldehyde 3-phosphate. Residues Gly-211 and 232 to 233 (GS) each bind D-ribose 5-phosphate.

The protein belongs to the PdxS/SNZ family. In terms of assembly, in the presence of PdxT, forms a dodecamer of heterodimers.

It carries out the reaction aldehydo-D-ribose 5-phosphate + D-glyceraldehyde 3-phosphate + L-glutamine = pyridoxal 5'-phosphate + L-glutamate + phosphate + 3 H2O + H(+). Its pathway is cofactor biosynthesis; pyridoxal 5'-phosphate biosynthesis. Its function is as follows. Catalyzes the formation of pyridoxal 5'-phosphate from ribose 5-phosphate (RBP), glyceraldehyde 3-phosphate (G3P) and ammonia. The ammonia is provided by the PdxT subunit. Can also use ribulose 5-phosphate and dihydroxyacetone phosphate as substrates, resulting from enzyme-catalyzed isomerization of RBP and G3P, respectively. In Francisella tularensis subsp. tularensis (strain FSC 198), this protein is Pyridoxal 5'-phosphate synthase subunit PdxS.